Here is a 329-residue protein sequence, read N- to C-terminus: Glycerol-3-phosphate dehydrogenase [NAD(P)+] (329 aa).

3 residues coordinate NADPH: W11, R31, and K105. Residues K105, G135, and T137 each contribute to the sn-glycerol 3-phosphate site. NADPH is bound at residue A139. Residues K190, D243, S253, R254, and N255 each contribute to the sn-glycerol 3-phosphate site. K190 functions as the Proton acceptor in the catalytic mechanism. R254 serves as a coordination point for NADPH. NADPH is bound by residues V277 and E279.

This sequence belongs to the NAD-dependent glycerol-3-phosphate dehydrogenase family.

The protein localises to the cytoplasm. The catalysed reaction is sn-glycerol 3-phosphate + NAD(+) = dihydroxyacetone phosphate + NADH + H(+). The enzyme catalyses sn-glycerol 3-phosphate + NADP(+) = dihydroxyacetone phosphate + NADPH + H(+). It participates in membrane lipid metabolism; glycerophospholipid metabolism. Catalyzes the reduction of the glycolytic intermediate dihydroxyacetone phosphate (DHAP) to sn-glycerol 3-phosphate (G3P), the key precursor for phospholipid synthesis. This Maridesulfovibrio salexigens (strain ATCC 14822 / DSM 2638 / NCIMB 8403 / VKM B-1763) (Desulfovibrio salexigens) protein is Glycerol-3-phosphate dehydrogenase [NAD(P)+].